The following is a 632-amino-acid chain: Epsin-3 (632 aa).

Positions 8, 11, 25, 30, 63, and 73 each coordinate a 1,2-diacyl-sn-glycero-3-phospho-(1D-myo-inositol-4,5-bisphosphate). The ENTH domain maps to 12–144 (NIVHNYSEAE…KDEERLRQER (133 aa)). The tract at residues 172–214 (YGEDYSRSRGSPSSYNSSSSSPRYTSDLEQARPQTSGEEELQL) is disordered. Residues 179–196 (SRGSPSSYNSSSSSPRYT) show a composition bias toward low complexity. Residues serine 191 and serine 192 each carry the phosphoserine modification. 2 UIM domains span residues 209 to 228 (EEEL…AEKP) and 236 to 255 (DEDL…HEKE). The interval 257–296 (RSWQGDGSPMANGAGAVVHHQRDREPEREERKEEEKLKTS) is disordered. Serine 264 carries the post-translational modification Phosphoserine. Over residues 276–294 (HQRDREPEREERKEEEKLK) the composition is skewed to basic and acidic residues. Repeat copies occupy residues 321 to 323 (DPW), 344 to 346 (DPW), 371 to 373 (EPW), 387 to 389 (DPW), 404 to 406 (DPW), 524 to 526 (NPF), 537 to 539 (NPF), and 629 to 631 (NPF). The tract at residues 321 to 406 (DPWDIPGFRP…KLPSTGADPW (86 aa)) is 5 X 3 AA repeats of [DE]-P-W. Disordered stretches follow at residues 326-501 (PGFR…SFLG), 525-560 (PFLT…PALG), and 604-632 (AFAP…NPFL). Residues 353-371 (TVLSRSQPWDLTPMLSSSE) show a composition bias toward polar residues. Residues 524–631 (NPFLTGLSAP…PPPQTGTNPF (108 aa)) are 3 X 3 AA repeats of N-P-F.

Belongs to the epsin family. As to expression, detected in migrating keratinocytes from wounded skin, but not in differentiating keratinocytes or in normal skin. Detected in chronic wounds, basal cell carcinoma and ulcerative colitis.

It localises to the cytoplasm. The protein localises to the perinuclear region. It is found in the cytoplasmic vesicle. Its subcellular location is the clathrin-coated vesicle. The protein resides in the nucleus. The polypeptide is Epsin-3 (EPN3) (Homo sapiens (Human)).